The following is a 309-amino-acid chain: Ribonuclease Z (309 aa).

7 residues coordinate Zn(2+): histidine 63, histidine 65, aspartate 67, histidine 68, histidine 145, aspartate 216, and histidine 274. Aspartate 67 (proton acceptor) is an active-site residue.

Belongs to the RNase Z family. In terms of assembly, homodimer. Zn(2+) serves as cofactor.

It catalyses the reaction Endonucleolytic cleavage of RNA, removing extra 3' nucleotides from tRNA precursor, generating 3' termini of tRNAs. A 3'-hydroxy group is left at the tRNA terminus and a 5'-phosphoryl group is left at the trailer molecule.. Zinc phosphodiesterase, which displays some tRNA 3'-processing endonuclease activity. Probably involved in tRNA maturation, by removing a 3'-trailer from precursor tRNA. This Streptococcus gordonii (strain Challis / ATCC 35105 / BCRC 15272 / CH1 / DL1 / V288) protein is Ribonuclease Z.